The primary structure comprises 919 residues: Isoleucine--tRNA ligase (919 aa).

A 'HIGH' region motif is present at residues 57–67 (PYANGHIHIGT). Glutamate 553 serves as a coordination point for L-isoleucyl-5'-AMP. Residues 594-598 (KMSKS) carry the 'KMSKS' region motif. Lysine 597 is a binding site for ATP. The Zn(2+) site is built by cysteine 887, cysteine 890, cysteine 907, and cysteine 910.

This sequence belongs to the class-I aminoacyl-tRNA synthetase family. IleS type 1 subfamily. In terms of assembly, monomer. Zn(2+) serves as cofactor.

It localises to the cytoplasm. It carries out the reaction tRNA(Ile) + L-isoleucine + ATP = L-isoleucyl-tRNA(Ile) + AMP + diphosphate. Functionally, catalyzes the attachment of isoleucine to tRNA(Ile). As IleRS can inadvertently accommodate and process structurally similar amino acids such as valine, to avoid such errors it has two additional distinct tRNA(Ile)-dependent editing activities. One activity is designated as 'pretransfer' editing and involves the hydrolysis of activated Val-AMP. The other activity is designated 'posttransfer' editing and involves deacylation of mischarged Val-tRNA(Ile). The chain is Isoleucine--tRNA ligase from Thermotoga maritima (strain ATCC 43589 / DSM 3109 / JCM 10099 / NBRC 100826 / MSB8).